We begin with the raw amino-acid sequence, 210 residues long: TM2 domain-containing protein C02F5.13 (210 aa).

The N-terminal stretch at M1 to G18 is a signal peptide. At N19–C138 the chain is on the extracellular side. A glycan (N-linked (GlcNAc...) asparagine) is linked at N91. A helical transmembrane segment spans residues I139–V159. Positions G143–F191 constitute a TM2 domain. At A160–T178 the chain is on the cytoplasmic side. Residues L179–G199 form a helical membrane-spanning segment. Residues P200–Y210 lie on the Extracellular side of the membrane.

The protein belongs to the TM2 family.

It is found in the membrane. The sequence is that of TM2 domain-containing protein C02F5.13 from Caenorhabditis elegans.